The sequence spans 215 residues: uncharacterized protein (215 aa).

The tract at residues 120-147 (HRAPQGTSSYQEGRRAHEATSAESDDDN) is disordered.

This is an uncharacterized protein from Homo sapiens (Human).